Consider the following 128-residue polypeptide: Large ribosomal subunit protein bL12 (128 aa).

This sequence belongs to the bacterial ribosomal protein bL12 family. As to quaternary structure, homodimer. Part of the ribosomal stalk of the 50S ribosomal subunit. Forms a multimeric L10(L12)X complex, where L10 forms an elongated spine to which 2 to 4 L12 dimers bind in a sequential fashion. Binds GTP-bound translation factors.

Functionally, forms part of the ribosomal stalk which helps the ribosome interact with GTP-bound translation factors. Is thus essential for accurate translation. This is Large ribosomal subunit protein bL12 from Thermosipho africanus (strain TCF52B).